A 137-amino-acid polypeptide reads, in one-letter code: Nucleoside diphosphate kinase (137 aa).

Positions 9, 57, 85, 91, 102, and 112 each coordinate ATP. Residue His115 is the Pros-phosphohistidine intermediate of the active site.

Belongs to the NDK family. In terms of assembly, homotetramer. It depends on Mg(2+) as a cofactor.

The protein resides in the cytoplasm. The enzyme catalyses a 2'-deoxyribonucleoside 5'-diphosphate + ATP = a 2'-deoxyribonucleoside 5'-triphosphate + ADP. It carries out the reaction a ribonucleoside 5'-diphosphate + ATP = a ribonucleoside 5'-triphosphate + ADP. Major role in the synthesis of nucleoside triphosphates other than ATP. The ATP gamma phosphate is transferred to the NDP beta phosphate via a ping-pong mechanism, using a phosphorylated active-site intermediate. The sequence is that of Nucleoside diphosphate kinase from Nitratiruptor sp. (strain SB155-2).